The following is a 202-amino-acid chain: Ribonuclease HII (202 aa).

The 190-residue stretch at 13–202 (KIEAGLDEAG…HFKPKQLDLF (190 aa)) folds into the RNase H type-2 domain. A divalent metal cation contacts are provided by Asp19, Glu20, and Asp112.

This sequence belongs to the RNase HII family. It depends on Mn(2+) as a cofactor. Mg(2+) serves as cofactor.

It is found in the cytoplasm. It catalyses the reaction Endonucleolytic cleavage to 5'-phosphomonoester.. Its function is as follows. Endonuclease that specifically degrades the RNA of RNA-DNA hybrids. In Cytophaga hutchinsonii (strain ATCC 33406 / DSM 1761 / CIP 103989 / NBRC 15051 / NCIMB 9469 / D465), this protein is Ribonuclease HII.